We begin with the raw amino-acid sequence, 422 residues long: MVTIVLGAQFGDEGKGKITDLLSQSAALCCRAAGGHNAGHTIVHDNITYDFHILPSGLIAPDCVNLIGTGTVVHLPSFFKELDALKAKGLKDAHKRIFISDRAQVCFDLHSVVDGLEEASLAGKKVGTTGKGIGPCYSDKASRRGVRIGEVLEEGVVEDNLRKLEAGYRARFGELNYDLEEEIGRFNEYRTKLQPYVVDQMTFLEKYRSSPSILVEGANALMLDIDHGTYPYVTSSCTGVGGAIQGLTLNPTSIRSIIGVVKAYSTRVGSGPFPTEQNNAIGEKMQTIGREFGVTTGRRRRCGWLDMVMCRYSNSINHYTSINLTKLDILDDFDEIKVAVAYKLDGKRLESFPALPGVLDKVEVEYVTFPGWKSTTMGIIRWEDLPANAQRYIQFIEREMGGVPIKWIGTGPARTHMIEREV.

GTP is bound by residues 11–17 and 39–41; these read GDEGKGK and GHT. The Proton acceptor role is filled by aspartate 12. 2 residues coordinate Mg(2+): aspartate 12 and glycine 39. IMP contacts are provided by residues 12-15, 37-40, threonine 129, arginine 143, asparagine 219, threonine 234, and arginine 298; these read DEGK and NAGH. The active-site Proton donor is the histidine 40. 294-300 serves as a coordination point for substrate; the sequence is VTTGRRR. Residues arginine 300, 326 to 328, and 409 to 411 contribute to the GTP site; these read KLD and GTG.

It belongs to the adenylosuccinate synthetase family. In terms of assembly, homodimer. It depends on Mg(2+) as a cofactor.

It localises to the cytoplasm. The catalysed reaction is IMP + L-aspartate + GTP = N(6)-(1,2-dicarboxyethyl)-AMP + GDP + phosphate + 2 H(+). The protein operates within purine metabolism; AMP biosynthesis via de novo pathway; AMP from IMP: step 1/2. In terms of biological role, plays an important role in the de novo pathway and in the salvage pathway of purine nucleotide biosynthesis. Catalyzes the first committed step in the biosynthesis of AMP from IMP. The polypeptide is Adenylosuccinate synthetase (Ajellomyces capsulatus (strain NAm1 / WU24) (Darling's disease fungus)).